The following is a 337-amino-acid chain: Probable dual-specificity RNA methyltransferase RlmN (337 aa).

Glu88 acts as the Proton acceptor in catalysis. Positions 94–322 (SSDRLTVCVS…ASIRRSRGLD (229 aa)) constitute a Radical SAM core domain. Cysteines 101 and 327 form a disulfide. [4Fe-4S] cluster-binding residues include Cys108, Cys112, and Cys115. Residues 155 to 156 (GE), Ser185, 208 to 210 (SLH), and Asn284 each bind S-adenosyl-L-methionine. The S-methylcysteine intermediate role is filled by Cys327.

The protein belongs to the radical SAM superfamily. RlmN family. It depends on [4Fe-4S] cluster as a cofactor.

It localises to the cytoplasm. The catalysed reaction is adenosine(2503) in 23S rRNA + 2 reduced [2Fe-2S]-[ferredoxin] + 2 S-adenosyl-L-methionine = 2-methyladenosine(2503) in 23S rRNA + 5'-deoxyadenosine + L-methionine + 2 oxidized [2Fe-2S]-[ferredoxin] + S-adenosyl-L-homocysteine. The enzyme catalyses adenosine(37) in tRNA + 2 reduced [2Fe-2S]-[ferredoxin] + 2 S-adenosyl-L-methionine = 2-methyladenosine(37) in tRNA + 5'-deoxyadenosine + L-methionine + 2 oxidized [2Fe-2S]-[ferredoxin] + S-adenosyl-L-homocysteine. In terms of biological role, specifically methylates position 2 of adenine 2503 in 23S rRNA and position 2 of adenine 37 in tRNAs. The protein is Probable dual-specificity RNA methyltransferase RlmN of Thermosynechococcus vestitus (strain NIES-2133 / IAM M-273 / BP-1).